The following is a 128-amino-acid chain: Cytochrome b (128 aa).

The next 3 helical transmembrane spans lie at F25–I45, W69–I90, and W105–Y125. Residues H75 and H89 each coordinate heme b. Residue H126 coordinates a ubiquinone.

This sequence belongs to the cytochrome b family. In terms of assembly, the cytochrome bc1 complex contains 3 respiratory subunits (MT-CYB, CYC1 and UQCRFS1), 2 core proteins (UQCRC1 and UQCRC2) and probably 6 low-molecular weight proteins. Heme b serves as cofactor.

Its subcellular location is the mitochondrion inner membrane. In terms of biological role, component of the ubiquinol-cytochrome c reductase complex (complex III or cytochrome b-c1 complex) that is part of the mitochondrial respiratory chain. The b-c1 complex mediates electron transfer from ubiquinol to cytochrome c. Contributes to the generation of a proton gradient across the mitochondrial membrane that is then used for ATP synthesis. This Crotalus viridis viridis (Prairie rattlesnake) protein is Cytochrome b (MT-CYB).